Reading from the N-terminus, the 200-residue chain is NADH-quinone oxidoreductase subunit B 2 (200 aa).

Residues C79, C80, C144, and C174 each contribute to the [4Fe-4S] cluster site.

This sequence belongs to the complex I 20 kDa subunit family. As to quaternary structure, NDH-1 is composed of 14 different subunits. Subunits NuoB, C, D, E, F, and G constitute the peripheral sector of the complex. The cofactor is [4Fe-4S] cluster.

The protein resides in the cell inner membrane. The catalysed reaction is a quinone + NADH + 5 H(+)(in) = a quinol + NAD(+) + 4 H(+)(out). In terms of biological role, NDH-1 shuttles electrons from NADH, via FMN and iron-sulfur (Fe-S) centers, to quinones in the respiratory chain. The immediate electron acceptor for the enzyme in this species is believed to be ubiquinone. Couples the redox reaction to proton translocation (for every two electrons transferred, four hydrogen ions are translocated across the cytoplasmic membrane), and thus conserves the redox energy in a proton gradient. This is NADH-quinone oxidoreductase subunit B 2 from Rhodopseudomonas palustris (strain BisA53).